Reading from the N-terminus, the 383-residue chain is Adaptive-response sensory kinase SasA (383 aa).

The Histidine kinase domain occupies 152–365 (MVAHELRTPL…CFTFNVPIWQ (214 aa)). H155 is modified (phosphohistidine; by autocatalysis).

In terms of assembly, homooligomerizes. Interacts with KaiC. Participates in the KaiABC clock complex, whose core is composed of a KaiC homohexamer, 6 KaiB and up to 6 KaiA dimers. SasA and KaiB(fs) compete to bind to KaiC.

The catalysed reaction is ATP + protein L-histidine = ADP + protein N-phospho-L-histidine.. In terms of biological role, member of the two-component regulatory system SasA/RpaA involved in genome-wide circadian gene expression. One of several clock output pathways. Participates in the Kai clock protein complex, the main circadian regulator in cyanobacteria, via its interaction with KaiC. KaiC enhances the autophosphorylation activity of SasA, which then transfers its phosphate group to RpaA to activate it. In addition to its output function, recruits fold-shifted KaiB (KaiB(fs)) to KaiC to cooperatively form the KaiB(6):KaiC(6) complex (independent of SasA kinase activity). Required for robustness of the circadian rhythm of gene expression and is involved in clock output, also required for adaptation to light/dark cycles. The polypeptide is Adaptive-response sensory kinase SasA (Synechococcus sp. (strain CC9311)).